We begin with the raw amino-acid sequence, 121 residues long: MIQPQTCLNVADNSGAKKLMCIRVLGTNRRYGHVGDVIIGVVKDATPNLTVKRSDVVRAVIVRTKQSIRRKDGSRLRFDDNATVIINKENNPRGTRVFGPIARELKDNGFTKIVSLAPEVL.

It belongs to the universal ribosomal protein uL14 family. Part of the 50S ribosomal subunit.

It localises to the plastid. It is found in the chloroplast. Functionally, binds to 23S rRNA. The polypeptide is Large ribosomal subunit protein uL14c (Emiliania huxleyi (Coccolithophore)).